Reading from the N-terminus, the 2599-residue chain is Non-reducing polyketide synthase azaA (2599 aa).

The interval proline 95–glutamine 231 is N-terminal acylcarrier protein transacylase domain (SAT). Cysteine 132 acts as the Nucleophile; for transacylase activity in catalysis. Histidine 250 functions as the Proton donor/acceptor; for transacylase activity in the catalytic mechanism. Positions proline 372–glutamine 790 constitute a Ketosynthase family 3 (KS3) domain. Residues cysteine 539, histidine 674, and histidine 713 each act as for beta-ketoacyl synthase activity in the active site. The interval phenylalanine 902–glycine 1193 is malonyl-CoA:ACP transacylase (MAT) domain. Residues proline 1282–aspartate 1413 form an N-terminal hotdog fold region. In terms of domain architecture, PKS/mFAS DH spans proline 1282–serine 1591. The tract at residues leucine 1310–serine 1589 is product template (PT) domain. Histidine 1314 (proton acceptor; for dehydratase activity) is an active-site residue. Residues alanine 1443–serine 1591 form a C-terminal hotdog fold region. Residue aspartate 1499 is the Proton donor; for dehydratase activity of the active site. The interval glutamate 1601–glutamine 1652 is disordered. Residues alanine 1602–arginine 1619 are compositionally biased toward low complexity. The region spanning glutamine 1653–valine 1727 is the Carrier domain. O-(pantetheine 4'-phosphoryl)serine is present on serine 1687. Positions asparagine 1749–serine 1779 are disordered. Residues leucine 1750–aspartate 1766 show a composition bias toward low complexity. Residues leucine 1769–serine 1779 show a composition bias toward polar residues. Residues aspartate 1952–aspartate 2140 are methyltransferase domain. An NADPH-binding (R) domain region spans residues isoleucine 2222–alanine 2467.

The cofactor is pantetheine 4'-phosphate.

Its pathway is secondary metabolite biosynthesis. Non-reducing polyketide synthase; part of the gene cluster that mediates the biosynthesis of azaphilones, a class of fungal metabolites characterized by a highly oxygenated pyrano-quinone bicyclic core and exhibiting a broad range of bioactivities. In the first step, the non-reducing polyketide synthase azaA forms the hexaketide precursor from successive condensations of five malonyl-CoA units, presumably with a simple acetyl-CoA starter unit. The reactive polyketide chain then undergoes a PT-mediated C2-C7 cyclization to afford the aromatic ring and is eventually released as an aldehyde through the R-domain. The putative ketoreductase azaE is proposed to catalyze the reduction of the terminal ketone resulting in the early culture product FK17-P2a. The monooxygenase azaH was demonstrated to be the only enzyme required to convert FK17-P2a to azanigerone E. AzaH first hydroxylates the benzaldehyde intermediate FK17-P2a at C4, which triggers the formation of the pyran-ring to afford azanigerone E. In parallel, the 2,4-dimethylhexanoyl chain is synthesized by the HR-PKS azaB and is proposed to be transferred to the C4-hydroxyl of azanigerone E by the acyltransferase azaD directly from the ACP domain of azaB. Alternatively, the 2,4-dimethyl-hexanoyl chain may be offloaded from the HR-PKS as a carboxylic acid and converted to an acyl-CoA by azaF. The resulting acyl-CoA molecule could then be taken up as a substrate by AzaD to form azanigerone B. To yield the carboxylic acid substituent in azanigerone A, the hydroxypropyl side chain of azanigerone B would need to undergo a C-C oxidative cleavage catalyzed by cytochrome P450 AzaI. AzaI is proposed to act on a vicinal diol that leads to a C-C bond scission either through an alkoxyradical intermediate or a peroxy complex. In the biosynthesis of azanigerone A, azanigerone B first undergoes hydroxylation at C10, possibly catalyzed by one of the two FAD-dependent monooxygenases encoded in the cluster, azaG or azaL, resulting in the vicinal diol azanigerone C. Oxidative cleavage of azanigerone C by azaI would yield the corresponding aldehyde derivative of azanigerone A. Finally, the dehydrogenase azaJ is proposed to convert the aldehyde functional group into the carboxylic acid, completing the conversion from azanigerone B to azanigerone A. Alternatively, the oxidation of aldehyde to carboxylic acid may be catalyzed by the same P450 enzyme azaI via consecutive oxidation or by endogenous alcohol dehydrogenase. The protein is Non-reducing polyketide synthase azaA of Aspergillus niger (strain ATCC 1015 / CBS 113.46 / FGSC A1144 / LSHB Ac4 / NCTC 3858a / NRRL 328 / USDA 3528.7).